Reading from the N-terminus, the 225-residue chain is Heptaprenylglyceryl phosphate synthase (225 aa).

Sn-glycerol 1-phosphate is bound at residue lysine 6. 2 residues coordinate Mg(2+): aspartate 8 and threonine 34. Sn-glycerol 1-phosphate-binding positions include 153-158, glycine 183, and 203-204; these read YIEYSG and GN.

This sequence belongs to the GGGP/HepGP synthase family. Group I subfamily. In terms of assembly, homodimer. Requires Mg(2+) as cofactor.

The enzyme catalyses sn-glycerol 1-phosphate + all-trans-heptaprenyl diphosphate = 3-heptaprenyl-sn-glycero-1-phosphate + diphosphate. Its pathway is membrane lipid metabolism; glycerophospholipid metabolism. In terms of biological role, prenyltransferase that catalyzes in vivo the transfer of the heptaprenyl moiety of heptaprenyl pyrophosphate (HepPP; 35 carbon atoms) to the C3 hydroxyl of sn-glycerol-1-phosphate (G1P), producing heptaprenylglyceryl phosphate (HepGP). This reaction is an ether-bond-formation step in the biosynthesis of archaea-type G1P-based membrane lipids found in Bacillales. The sequence is that of Heptaprenylglyceryl phosphate synthase from Listeria welshimeri serovar 6b (strain ATCC 35897 / DSM 20650 / CCUG 15529 / CIP 8149 / NCTC 11857 / SLCC 5334 / V8).